Consider the following 331-residue polypeptide: SERPKRVFNIYWNVPTFMCHQYDLYFDEVTNFNIKRNSKDDFQGDKIAIFYDPGEFPALLSLKDGKYKKRNGGVPQEGNITIHLQKFIENLDKIYPNRNFSGIGVIDFERWRPIFRQNWGNMKIHKNFSIDLVRNEHPTWNKKMIELEASKRFEKYARFFMEETLKLAKKTRKQADWGYYGYPYCFNMSPNNLVPECDVTAMHENDKMSWLFNNQNVLLPSVYVRQELTPDQRIGLVQGRVKEAVRISNNLKHSPKVLSYWWYVYQDETNTFLTETDVKKTFQEIVINGGDGIIIWGSSSDVNSLSKCKRLQDYLLTVLGPIAINVTEAVN.

Cystine bridges form between Cys-19–Cys-308 and Cys-185–Cys-197. 2 N-linked (GlcNAc...) asparagine glycosylation sites follow: Asn-79 and Asn-99. The active-site Proton donor is Glu-109. A glycan (N-linked (GlcNAc...) asparagine) is linked at Asn-127. The N-linked (GlcNAc...) asparagine glycan is linked to Asn-325.

It belongs to the glycosyl hydrolase 56 family. As to expression, expressed by the venom gland.

The protein localises to the secreted. The catalysed reaction is Random hydrolysis of (1-&gt;4)-linkages between N-acetyl-beta-D-glucosamine and D-glucuronate residues in hyaluronate.. Its function is as follows. Hydrolyzes high molecular weight hyaluronic acid to produce small oligosaccharides. The protein is Hyaluronidase A of Vespula vulgaris (Yellow jacket).